The sequence spans 348 residues: Ribosomal RNA small subunit methyltransferase C (348 aa).

The protein belongs to the methyltransferase superfamily. RsmC family. As to quaternary structure, monomer.

The protein localises to the cytoplasm. The catalysed reaction is guanosine(1207) in 16S rRNA + S-adenosyl-L-methionine = N(2)-methylguanosine(1207) in 16S rRNA + S-adenosyl-L-homocysteine + H(+). Functionally, specifically methylates the guanine in position 1207 of 16S rRNA in the 30S particle. The protein is Ribosomal RNA small subunit methyltransferase C of Pectobacterium atrosepticum (strain SCRI 1043 / ATCC BAA-672) (Erwinia carotovora subsp. atroseptica).